The following is a 165-amino-acid chain: Thiol peroxidase (165 aa).

Positions 18–165 (PQVGDNLAEF…DYDAALAALN (148 aa)) constitute a Thioredoxin domain. Catalysis depends on Cys-60, which acts as the Cysteine sulfenic acid (-SOH) intermediate. Cys-60 and Cys-94 are joined by a disulfide.

This sequence belongs to the peroxiredoxin family. Tpx subfamily. As to quaternary structure, homodimer.

The enzyme catalyses a hydroperoxide + [thioredoxin]-dithiol = an alcohol + [thioredoxin]-disulfide + H2O. Thiol-specific peroxidase that catalyzes the reduction of hydrogen peroxide and organic hydroperoxides to water and alcohols, respectively. Plays a role in cell protection against oxidative stress by detoxifying peroxides. The chain is Thiol peroxidase from Corynebacterium glutamicum (strain ATCC 13032 / DSM 20300 / JCM 1318 / BCRC 11384 / CCUG 27702 / LMG 3730 / NBRC 12168 / NCIMB 10025 / NRRL B-2784 / 534).